Reading from the N-terminus, the 456-residue chain is Cobyrinate a,c-diamide synthase (456 aa).

The region spanning 247–439 (PIAIARDRAF…LHLHFGGKPW (193 aa)) is the GATase cobBQ-type domain. Residue Cys-330 is the Nucleophile of the active site.

The protein belongs to the CobB/CbiA family. Mg(2+) is required as a cofactor.

It carries out the reaction cob(II)yrinate + 2 L-glutamine + 2 ATP + 2 H2O = cob(II)yrinate a,c diamide + 2 L-glutamate + 2 ADP + 2 phosphate + 2 H(+). It functions in the pathway cofactor biosynthesis; adenosylcobalamin biosynthesis; cob(II)yrinate a,c-diamide from sirohydrochlorin (anaerobic route): step 10/10. In terms of biological role, catalyzes the ATP-dependent amidation of the two carboxylate groups at positions a and c of cobyrinate, using either L-glutamine or ammonia as the nitrogen source. The protein is Cobyrinate a,c-diamide synthase of Synechococcus sp. (strain ATCC 27144 / PCC 6301 / SAUG 1402/1) (Anacystis nidulans).